The sequence spans 418 residues: Probable carboxypeptidase AO090166000075 (418 aa).

A signal peptide spans Met-1 to Ala-18. A glycan (N-linked (GlcNAc...) asparagine) is linked at Asn-74. A Zn(2+)-binding site is contributed by Asp-147. A glycan (N-linked (GlcNAc...) asparagine) is linked at Asn-168. Residue Glu-179 is the Proton acceptor of the active site. Glu-180 serves as a coordination point for Zn(2+).

This sequence belongs to the peptidase M20A family. Zn(2+) is required as a cofactor.

Its subcellular location is the secreted. This Aspergillus oryzae (strain ATCC 42149 / RIB 40) (Yellow koji mold) protein is Probable carboxypeptidase AO090166000075.